A 144-amino-acid chain; its full sequence is Large ribosomal subunit protein uL15 (144 aa).

The segment at Met-1–Val-44 is disordered. The span at Thr-23–Gln-35 shows a compositional bias: gly residues.

This sequence belongs to the universal ribosomal protein uL15 family. Part of the 50S ribosomal subunit.

Functionally, binds to the 23S rRNA. The protein is Large ribosomal subunit protein uL15 of Leuconostoc mesenteroides subsp. mesenteroides (strain ATCC 8293 / DSM 20343 / BCRC 11652 / CCM 1803 / JCM 6124 / NCDO 523 / NBRC 100496 / NCIMB 8023 / NCTC 12954 / NRRL B-1118 / 37Y).